Here is a 389-residue protein sequence, read N- to C-terminus: Galactokinase (389 aa).

34–37 lines the substrate pocket; sequence EHTD. Residues Ser68 and 125-131 contribute to the ATP site; that span reads GSGLSSS. Ser131 and Glu163 together coordinate Mg(2+). Residue Asp175 is the Proton acceptor of the active site. Tyr225 contributes to the substrate binding site.

The protein belongs to the GHMP kinase family. GalK subfamily.

It localises to the cytoplasm. The catalysed reaction is alpha-D-galactose + ATP = alpha-D-galactose 1-phosphate + ADP + H(+). It participates in carbohydrate metabolism; galactose metabolism. Catalyzes the transfer of the gamma-phosphate of ATP to D-galactose to form alpha-D-galactose-1-phosphate (Gal-1-P). The polypeptide is Galactokinase (Clostridium acetobutylicum (strain ATCC 824 / DSM 792 / JCM 1419 / IAM 19013 / LMG 5710 / NBRC 13948 / NRRL B-527 / VKM B-1787 / 2291 / W)).